The sequence spans 132 residues: Hydrogenase maturation factor HypA (132 aa).

A Ni(2+)-binding site is contributed by His2. Residues Cys74, Cys77, Cys91, and Cys94 each contribute to the Zn(2+) site.

This sequence belongs to the HypA/HybF family.

Functionally, involved in the maturation of [NiFe] hydrogenases. Required for nickel insertion into the metal center of the hydrogenase. This Synechococcus sp. (strain JA-2-3B'a(2-13)) (Cyanobacteria bacterium Yellowstone B-Prime) protein is Hydrogenase maturation factor HypA.